Consider the following 732-residue polypeptide: Phosphoribosylformylglycinamidine synthase subunit PurL (732 aa).

The active site involves His-42. Tyr-45 and Lys-84 together coordinate ATP. Glu-86 contacts Mg(2+). Substrate contacts are provided by residues 87–90 (SHNH) and Arg-109. The Proton acceptor role is filled by His-88. Position 110 (Asp-110) interacts with Mg(2+). Gln-238 is a substrate binding site. Position 266 (Asp-266) interacts with Mg(2+). Residue 310–312 (ESQ) coordinates substrate. Asp-496 and Gly-533 together coordinate ATP. Asn-534 contributes to the Mg(2+) binding site. Ser-536 contributes to the substrate binding site.

The protein belongs to the FGAMS family. Monomer. Part of the FGAM synthase complex composed of 1 PurL, 1 PurQ and 2 PurS subunits.

Its subcellular location is the cytoplasm. It carries out the reaction N(2)-formyl-N(1)-(5-phospho-beta-D-ribosyl)glycinamide + L-glutamine + ATP + H2O = 2-formamido-N(1)-(5-O-phospho-beta-D-ribosyl)acetamidine + L-glutamate + ADP + phosphate + H(+). The protein operates within purine metabolism; IMP biosynthesis via de novo pathway; 5-amino-1-(5-phospho-D-ribosyl)imidazole from N(2)-formyl-N(1)-(5-phospho-D-ribosyl)glycinamide: step 1/2. Part of the phosphoribosylformylglycinamidine synthase complex involved in the purines biosynthetic pathway. Catalyzes the ATP-dependent conversion of formylglycinamide ribonucleotide (FGAR) and glutamine to yield formylglycinamidine ribonucleotide (FGAM) and glutamate. The FGAM synthase complex is composed of three subunits. PurQ produces an ammonia molecule by converting glutamine to glutamate. PurL transfers the ammonia molecule to FGAR to form FGAM in an ATP-dependent manner. PurS interacts with PurQ and PurL and is thought to assist in the transfer of the ammonia molecule from PurQ to PurL. The chain is Phosphoribosylformylglycinamidine synthase subunit PurL from Campylobacter hominis (strain ATCC BAA-381 / DSM 21671 / CCUG 45161 / LMG 19568 / NCTC 13146 / CH001A).